Reading from the N-terminus, the 490-residue chain is Velvet complex subunit 2 (490 aa).

2 disordered regions span residues 23–148 (LYHH…ESQQ) and 295–316 (YQTQPTYSQGSSAYPSNGTYGP). The segment covering 54-70 (PPSHHFQLHPGHGHHQQ) has biased composition (basic residues). Residues 112–131 (AAEHRDHPQHALDEPSRSHD) show a composition bias toward basic and acidic residues. The Velvet domain maps to 164-474 (ATGRRYHLDV…AAQGIKIPIR (311 aa)). Residues 295-313 (YQTQPTYSQGSSAYPSNGT) are compositionally biased toward polar residues.

Belongs to the velvet family. VelB subfamily. As to quaternary structure, component of the heterotrimeric velvet complex composed of LAE1, VEL1 and VEL2; VEL1 acting as a bridging protein between LAE1 and VEL2. Forms a heterodimeric complex with VOS1; the formation of the VEL2-VOS1 complex is light-dependent.

It is found in the nucleus. The protein resides in the cytoplasm. Component of the velvet transcription factor complex that controls sexual/asexual developmental ratio in response to light, promoting sexual development in the darkness while stimulating asexual sporulation under illumination. The velvet complex acts as a global regulator for secondary metabolite gene expression. Component of the VEL2-VOS1 heterodimeric complex that plays a dual role in activating genes associated with spore maturation and repressing certain development-associated genes. The VEL2-VOS1 complex binds DNA through the DNA-binding domain of VOS1 that recognizes an 11-nucleotide consensus sequence 5'-CTGGCCGCGGC-3' consisting of two motifs in the promoters of key developmental regulatory genes. Regulates expression of cellulase-encoding genes such as the cellobiohydrolase-encoding genes cbh1 and cbh2, the endo-beta-1,4-glucanase-encoding genes egl1 and egl2, and the beta-glucosidase-encoding gene bgl1. This is Velvet complex subunit 2 from Hypocrea jecorina (strain QM6a) (Trichoderma reesei).